The sequence spans 402 residues: Putative polyketide beta-ketoacyl synthase 2 (402 aa).

2 disordered regions span residues 1-30 and 188-222; these read MTPV…WAPR and VEPR…FDRD. One can recognise a Ketosynthase family 3 (KS3) domain in the interval 1–400; sequence MTPVAVTGMG…GFNSALVVRA (400 aa). Positions 192–205 are enriched in low complexity; sequence SAPGAGSPSSPAGG.

This sequence belongs to the thiolase-like superfamily. Beta-ketoacyl-ACP synthases family.

Its pathway is antifungal biosynthesis; monensin biosynthesis. The protein is Putative polyketide beta-ketoacyl synthase 2 of Streptomyces virginiae (Streptomyces cinnamonensis).